Consider the following 416-residue polypeptide: Gamma-glutamyl phosphate reductase (416 aa).

The protein belongs to the gamma-glutamyl phosphate reductase family.

It is found in the cytoplasm. The catalysed reaction is L-glutamate 5-semialdehyde + phosphate + NADP(+) = L-glutamyl 5-phosphate + NADPH + H(+). It participates in amino-acid biosynthesis; L-proline biosynthesis; L-glutamate 5-semialdehyde from L-glutamate: step 2/2. In terms of biological role, catalyzes the NADPH-dependent reduction of L-glutamate 5-phosphate into L-glutamate 5-semialdehyde and phosphate. The product spontaneously undergoes cyclization to form 1-pyrroline-5-carboxylate. This is Gamma-glutamyl phosphate reductase from Salmonella paratyphi A (strain AKU_12601).